A 122-amino-acid polypeptide reads, in one-letter code: Large ribosomal subunit protein eL18 (122 aa).

The protein belongs to the eukaryotic ribosomal protein eL18 family.

The protein is Large ribosomal subunit protein eL18 of Thermoplasma volcanium (strain ATCC 51530 / DSM 4299 / JCM 9571 / NBRC 15438 / GSS1).